We begin with the raw amino-acid sequence, 108 residues long: UPF0060 membrane protein Rsph17029_0436 (108 aa).

The next 4 membrane-spanning stretches (helical) occupy residues 5 to 25 (LAAY…VWAW), 32 to 52 (ALWL…LALT), 62 to 82 (AVYG…VEGV), and 86 to 106 (RWDM…LWAP).

This sequence belongs to the UPF0060 family.

The protein resides in the cell inner membrane. This is UPF0060 membrane protein Rsph17029_0436 from Cereibacter sphaeroides (strain ATCC 17029 / ATH 2.4.9) (Rhodobacter sphaeroides).